The following is a 1962-amino-acid chain: Myosin heavy chain, muscle (1962 aa).

A Myosin N-terminal SH3-like domain is found at 33–82 (DSKKSCWIPDEKEGYLLGEIKATKGDIVSVGLQGGEVRDIKSEKVEKVNP). The 692-residue stretch at 86–777 (EKIEDMADMT…VLGQMEEFRD (692 aa)) folds into the Myosin motor domain. Position 179 to 186 (179 to 186 (GESGAGKT)) interacts with ATP. The tract at residues 656-678 (LNSLMTTLRSTQPHFVRCIIPNE) is actin-binding. The IQ domain maps to 780–809 (LGKIMSWMQAWARGYLSRKGFKKLQEQRVA). A coiled-coil region spans residues 802–1927 (KLQEQRVALK…KFRAKGRAGS (1126 aa)). 2 disordered regions span residues 1822 to 1862 (ENEL…NHER) and 1922 to 1962 (KGRA…ENEF).

Belongs to the TRAFAC class myosin-kinesin ATPase superfamily. Myosin family. In terms of assembly, muscle myosin is a hexameric protein that consists of 2 heavy chain subunits (MHC), 2 alkali light chain subunits (MLC) and 2 regulatory light chain subunits (MLC-2). Expressed in larval and adult muscles. Isoforms containing exon 9a are expressed in indirect flight muscles, exons 9a and 9b are expressed in jump muscles, exons 9b and 9c are expressed in other larval and adult muscles.

It localises to the cytoplasm. Its subcellular location is the myofibril. Its function is as follows. Muscle contraction. The chain is Myosin heavy chain, muscle (Mhc) from Drosophila melanogaster (Fruit fly).